A 553-amino-acid polypeptide reads, in one-letter code: Dihydrolipoyllysine-residue acetyltransferase component of pyruvate dehydrogenase complex (553 aa).

In terms of domain architecture, Lipoyl-binding 1 spans 4–78 (AIEIKVPDIG…SEGSVLVMLE (75 aa)). Lys44 carries the post-translational modification N6-lipoyllysine. The segment at 97–118 (AAAAPAPAPAPAAAPAAAPAAG) is disordered. Residues 122–196 (TIEVKVPDIG…AEGTLLLILE (75 aa)) form the Lipoyl-binding 2 domain. At Lys162 the chain carries N6-lipoyllysine. One can recognise a Peripheral subunit-binding (PSBD) domain in the interval 250 to 287 (HASPSVRKFARELGVDVSRVPGTGPKGRITQEDVQGYV). Residue His526 is part of the active site.

This sequence belongs to the 2-oxoacid dehydrogenase family. As to quaternary structure, forms a 24-polypeptide structural core with octahedral symmetry. Requires (R)-lipoate as cofactor.

It catalyses the reaction N(6)-[(R)-dihydrolipoyl]-L-lysyl-[protein] + acetyl-CoA = N(6)-[(R)-S(8)-acetyldihydrolipoyl]-L-lysyl-[protein] + CoA. Functionally, the pyruvate dehydrogenase complex catalyzes the overall conversion of pyruvate to acetyl-CoA and CO(2). It contains multiple copies of three enzymatic components: pyruvate dehydrogenase (E1), dihydrolipoamide acetyltransferase (E2) and lipoamide dehydrogenase (E3). In Cupriavidus necator (strain ATCC 17699 / DSM 428 / KCTC 22496 / NCIMB 10442 / H16 / Stanier 337) (Ralstonia eutropha), this protein is Dihydrolipoyllysine-residue acetyltransferase component of pyruvate dehydrogenase complex (pdhB).